The primary structure comprises 376 residues: Chaperone protein DnaJ (376 aa).

A J domain is found at 5 to 70 (DYYEILGVSK…QKRAAYDQYG (66 aa)). A CR-type zinc finger spans residues 131 to 209 (GVTKEIRIPT…CHGHGRVERS (79 aa)). Residues C144, C147, C161, C164, C183, C186, C197, and C200 each coordinate Zn(2+). 4 CXXCXGXG motif repeats span residues 144 to 151 (CDVCHGSG), 161 to 168 (CPTCHGSG), 183 to 190 (CPHCQGRG), and 197 to 204 (CNKCHGHG).

The protein belongs to the DnaJ family. Homodimer. It depends on Zn(2+) as a cofactor.

The protein resides in the cytoplasm. Functionally, participates actively in the response to hyperosmotic and heat shock by preventing the aggregation of stress-denatured proteins and by disaggregating proteins, also in an autonomous, DnaK-independent fashion. Unfolded proteins bind initially to DnaJ; upon interaction with the DnaJ-bound protein, DnaK hydrolyzes its bound ATP, resulting in the formation of a stable complex. GrpE releases ADP from DnaK; ATP binding to DnaK triggers the release of the substrate protein, thus completing the reaction cycle. Several rounds of ATP-dependent interactions between DnaJ, DnaK and GrpE are required for fully efficient folding. Also involved, together with DnaK and GrpE, in the DNA replication of plasmids through activation of initiation proteins. This Shigella dysenteriae serotype 1 (strain Sd197) protein is Chaperone protein DnaJ.